Here is a 449-residue protein sequence, read N- to C-terminus: Tripartite motif-containing protein 64 (449 aa).

The segment at 15–56 adopts an RING-type zinc-finger fold; sequence CCICVNYFIDPVTIDCGHSFCRPCLCLCSEEGRAPMRCPSCR. A B box-type zinc finger spans residues 87 to 128; it reads SSDNICVLHEETKELFCEADKRLLCGPCSESPEHMAHSHSPI. Zn(2+) is bound by residues Cys-92, His-95, Cys-114, and His-120. Positions 189-225 form a coiled coil; it reads LDEEEQRHLQALEREAEELFQQLQDSQVRMTQHLERM. A B30.2/SPRY domain is found at 269–449; it reads LTSWCITGVL…LRPFFCFGCT (181 aa).

The protein belongs to the TRIM/RBCC family.

This chain is Tripartite motif-containing protein 64 (TRIM64), found in Homo sapiens (Human).